The primary structure comprises 457 residues: Multidrug resistance protein MdtK (457 aa).

A run of 12 helical transmembrane segments spans residues 11–31, 53–73, 93–113, 127–147, 160–180, 188–208, 243–263, 276–296, 314–334, 357–377, 387–407, and 418–438; these read LLALAIPVILAQVAQTAMGFV, IWLPAILFGHGLLLALTPVIA, WLASFVSVLVMIVLWNAGYII, AVGYLRALLWGAPGYLFFQVA, GMVMGFLGLLVNIPVNYIFIY, LGGIGCGVATAAVYWVMFIAM, LPIALALFFEVTLFAVVALLV, IALNFSSLMFVLPMSLAAAVT, AARTGLSVGVCMAVVTAIFTV, LMLLAAVYQISDSIQVIGSGI, IFFITFTAYWVLGLPSGYILA, and PAGFWMGFIIGLTSAAVLMML.

It belongs to the multi antimicrobial extrusion (MATE) (TC 2.A.66.1) family. MdtK subfamily.

It is found in the cell inner membrane. Multidrug efflux pump that functions probably as a Na(+)/drug antiporter. The sequence is that of Multidrug resistance protein MdtK from Salmonella arizonae (strain ATCC BAA-731 / CDC346-86 / RSK2980).